The primary structure comprises 380 residues: Cytochrome b (380 aa).

Helical transmembrane passes span 34–54, 78–99, 114–134, and 179–199; these read FGSL…LLAM, WLIR…YLHI, WNTG…GYVL, and FFAL…IHLT. 2 residues coordinate heme b: histidine 84 and histidine 98. Heme b-binding residues include histidine 183 and histidine 197. An a ubiquinone-binding site is contributed by histidine 202. Helical transmembrane passes span 227 to 247, 289 to 309, 321 to 341, and 348 to 368; these read SKDI…ALLS, LGGV…PFLH, LSQA…WIGS, and FIII…ILLP.

This sequence belongs to the cytochrome b family. As to quaternary structure, the cytochrome bc1 complex contains 11 subunits: 3 respiratory subunits (MT-CYB, CYC1 and UQCRFS1), 2 core proteins (UQCRC1 and UQCRC2) and 6 low-molecular weight proteins (UQCRH/QCR6, UQCRB/QCR7, UQCRQ/QCR8, UQCR10/QCR9, UQCR11/QCR10 and a cleavage product of UQCRFS1). This cytochrome bc1 complex then forms a dimer. It depends on heme b as a cofactor.

Its subcellular location is the mitochondrion inner membrane. Component of the ubiquinol-cytochrome c reductase complex (complex III or cytochrome b-c1 complex) that is part of the mitochondrial respiratory chain. The b-c1 complex mediates electron transfer from ubiquinol to cytochrome c. Contributes to the generation of a proton gradient across the mitochondrial membrane that is then used for ATP synthesis. This is Cytochrome b (MT-CYB) from Phalcoboenus australis (Striated caracara).